Consider the following 133-residue polypeptide: Protransforming growth factor alpha (133 aa).

The signal sequence occupies residues 1 to 23; the sequence is MVPSAGQLALFALGIFLAVCQAL. Residues 24–38 constitute a propeptide, removed in mature form; that stretch reads ENSTSALSDPPVAAA. Topologically, residues 24–97 are extracellular; it reads ENSTSALSDP…AVVAASQKKQ (74 aa). Asn-25 is a glycosylation site (N-linked (GlcNAc...) asparagine). The region spanning 42–82 is the EGF-like domain; that stretch reads HFNDCPDSHTQFCFHGTCRFLLQEEKPACVCHSGYVGARCE. Cystine bridges form between Cys-46–Cys-59, Cys-54–Cys-70, and Cys-72–Cys-81. Positions 89 to 133 are cleaved as a propeptide — removed in mature form; it reads VVAASQKKQAITALVVVTIVALAVLIITCVLIHCCEVRKHSVVVP. Residues 98–120 form a helical membrane-spanning segment; the sequence is AITALVVVTIVALAVLIITCVLI. Residues 121–133 are Cytoplasmic-facing; sequence HCCEVRKHSVVVP.

As to quaternary structure, interacts with the PDZ domains of MAGI3, SDCBP and SNTA1. The interaction with SDCBP, is required for the targeting to the cell surface. In the endoplasmic reticulum, in its immature form (i.e. with a prosegment and lacking full N-glycosylation), interacts with CNIH. In the Golgi apparatus, may form a complex with CNIH and GORASP2. Interacts (via cytoplasmic C-terminal domain) with NKD2. As to expression, skin.

It is found in the secreted. Its subcellular location is the extracellular space. It localises to the cell membrane. TGF alpha is a mitogenic polypeptide that is able to bind to the EGF receptor/EGFR and to act synergistically with TGF beta to promote anchorage-independent cell proliferation in soft agar. The protein is Protransforming growth factor alpha (TGFA) of Ovis aries (Sheep).